A 167-amino-acid polypeptide reads, in one-letter code: Transcription factor E (167 aa).

Residues 5–87 (ENPIHRAYLL…LWKICPESLD (83 aa)) enclose the HTH TFE/IIEalpha-type domain.

This sequence belongs to the TFE family. Monomer. Interaction with RNA polymerase subunits RpoF and RpoE is necessary for Tfe stimulatory transcription activity. Able to interact with Tbp and RNA polymerase in the absence of DNA promoter. Interacts both with the preinitiation and elongation complexes.

Functionally, transcription factor that plays a role in the activation of archaeal genes transcribed by RNA polymerase. Facilitates transcription initiation by enhancing TATA-box recognition by TATA-box-binding protein (Tbp), and transcription factor B (Tfb) and RNA polymerase recruitment. Not absolutely required for transcription in vitro, but particularly important in cases where Tbp or Tfb function is not optimal. It dynamically alters the nucleic acid-binding properties of RNA polymerases by stabilizing the initiation complex and destabilizing elongation complexes. Seems to translocate with the RNA polymerase following initiation and acts by binding to the non template strand of the transcription bubble in elongation complexes. This Methanothrix thermoacetophila (strain DSM 6194 / JCM 14653 / NBRC 101360 / PT) (Methanosaeta thermophila) protein is Transcription factor E.